The sequence spans 66 residues: Venom protein 27.1 (66 aa).

The first 22 residues, 1–22, serve as a signal peptide directing secretion; it reads MNTKTLIVVFLVCLLVSEVVLA.

Post-translationally, contains 1 disulfide bond. In terms of tissue distribution, expressed by the venom gland.

It localises to the secreted. The polypeptide is Venom protein 27.1 (Lychas mucronatus (Chinese swimming scorpion)).